We begin with the raw amino-acid sequence, 119 residues long: Autophagy-related protein 8B (119 aa).

Gly117 is lipidated: Phosphatidylethanolamine amidated glycine. Residues 118-119 constitute a propeptide, removed in mature form; that stretch reads LL.

This sequence belongs to the ATG8 family. Interacts with ATG4. Post-translationally, the C-terminal 2 residues are removed by ATG4 to expose Gly-117 at the C-terminus. The C-terminal Gly is then amidated with phosphatidylethanolamine by an activating system similar to that for ubiquitin.

It is found in the cytoplasmic vesicle. Its subcellular location is the autophagosome membrane. The protein localises to the vacuole membrane. It localises to the cytoplasm. The protein resides in the cytoskeleton. Functionally, ubiquitin-like modifier involved in autophagosomes formation. May mediate the delivery of the autophagosomes to the vacuole via the microtubule cytoskeleton. This chain is Autophagy-related protein 8B (ATG8B), found in Oryza sativa subsp. indica (Rice).